A 315-amino-acid polypeptide reads, in one-letter code: Glutamyl-Q tRNA(Asp) synthetase (315 aa).

Residues 23–27 and E59 each bind L-glutamate; that span reads RFAPS. Residues 26–36 carry the 'HIGH' region motif; it reads PSPTGPLHIGS. C115, C117, Y142, and C146 together coordinate Zn(2+). Residues Y202 and R220 each coordinate L-glutamate. The short motif at 258–262 is the 'KMSKS' region element; that stretch reads KLSKQ. An ATP-binding site is contributed by K261.

Belongs to the class-I aminoacyl-tRNA synthetase family. GluQ subfamily. Zn(2+) is required as a cofactor.

In terms of biological role, catalyzes the tRNA-independent activation of glutamate in presence of ATP and the subsequent transfer of glutamate onto a tRNA(Asp). Glutamate is transferred on the 2-amino-5-(4,5-dihydroxy-2-cyclopenten-1-yl) moiety of the queuosine in the wobble position of the QUC anticodon. The polypeptide is Glutamyl-Q tRNA(Asp) synthetase (Ralstonia nicotianae (strain ATCC BAA-1114 / GMI1000) (Ralstonia solanacearum)).